The sequence spans 397 residues: Dual specificity mitogen-activated protein kinase kinase 4 (397 aa).

The tract at residues 1–38 (MAAPSPSGGGGSGGGGGTPGPIGPPASGHPAVSSMQGK) is disordered. N-acetylalanine is present on Ala2. A compositionally biased stretch (gly residues) spans 7 to 20 (SGGGGSGGGGGTPG). Residues 35–50 (MQGKRKALKLNFANPP) form a d domain region. Arg56 carries the asymmetric dimethylarginine; alternate modification. Arg56 carries the post-translational modification Omega-N-methylarginine; alternate. Ser88 carries the phosphoserine modification. Residues 100–366 (LKDLGEIGRG…KELLKHPFIL (267 aa)) form the Protein kinase domain. Residues 106-114 (IGRGAYGSV) and Lys129 contribute to the ATP site. Asp227 acts as the Proton acceptor in catalysis. Ser255 carries the phosphoserine modification. Phosphothreonine is present on Thr259. A DVD domain region spans residues 362 to 385 (HPFILMYEERTVEVACYVCKILDQ).

This sequence belongs to the protein kinase superfamily. STE Ser/Thr protein kinase family. MAP kinase kinase subfamily. As to quaternary structure, interacts with SPAG9. Interacts (via its D domain) with its substrates MAPK8/JNK1, MAPK9/JNK2, MAPK10/JNK3, MAPK11 and MAPK14. Interacts (via its DVD domain) with MAP3Ks activators like MAP3K1/MEKK1 and MAP3K11/MLK3. Interacts with ARRB1, ARRB2 and MAPK8IP3/JIP3. In terms of processing, activated by phosphorylation on Ser-255 and Thr-259 by MAP kinase kinase kinases (MAP3Ks). Strong expression is detected in most of the central nervous system and in liver and thymus during early stages of development. While expression in nervous system increases over time, expression in fetal liver and thymus gradually decreases as embryogenesis proceeds. High level of expression in the central nervous system persists throughout postnatal development and remained at a stable level in adult brain.

It is found in the cytoplasm. The protein resides in the nucleus. The enzyme catalyses L-seryl-[protein] + ATP = O-phospho-L-seryl-[protein] + ADP + H(+). The catalysed reaction is L-threonyl-[protein] + ATP = O-phospho-L-threonyl-[protein] + ADP + H(+). It carries out the reaction L-tyrosyl-[protein] + ATP = O-phospho-L-tyrosyl-[protein] + ADP + H(+). Activated in response to a variety of cellular stresses, including UV and gamma-irradiation, heat shock, hyperosmolarity, T-cell receptor stimulation, peroxide and inflammatory cytokines. Also activated by developmental cues. MAP2K4/MKK4 is activated by the majority of MKKKs, such as MAP3K5/ASK1, MAP3K1/MEKK1, MAP3K7/TAK1, MAP3K10/MLK2, MAP3K11/MLK3, MAP3K12/DLK and MAP3K13/LZK. In terms of biological role, dual specificity protein kinase which acts as an essential component of the MAP kinase signal transduction pathway. Essential component of the stress-activated protein kinase/c-Jun N-terminal kinase (SAP/JNK) signaling pathway. With MAP2K7/MKK7, is the one of the only known kinase to directly activate the stress-activated protein kinase/c-Jun N-terminal kinases MAPK8/JNK1, MAPK9/JNK2 and MAPK10/JNK3. MAP2K4/MKK4 and MAP2K7/MKK7 both activate the JNKs by phosphorylation, but they differ in their preference for the phosphorylation site in the Thr-Pro-Tyr motif. MAP2K4 shows preference for phosphorylation of the Tyr residue and MAP2K7/MKK7 for the Thr residue. The phosphorylation of the Thr residue by MAP2K7/MKK7 seems to be the prerequisite for JNK activation at least in response to pro-inflammatory cytokines, while other stimuli activate both MAP2K4/MKK4 and MAP2K7/MKK7 which synergistically phosphorylate JNKs. MAP2K4 is required for maintaining peripheral lymphoid homeostasis. The MKK/JNK signaling pathway is also involved in mitochondrial death signaling pathway, including the release cytochrome c, leading to apoptosis. Whereas MAP2K7/MKK7 exclusively activates JNKs, MAP2K4/MKK4 additionally activates the p38 MAPKs MAPK11, MAPK12, MAPK13 and MAPK14. This chain is Dual specificity mitogen-activated protein kinase kinase 4 (Map2k4), found in Mus musculus (Mouse).